A 202-amino-acid chain; its full sequence is Nucleoside triphosphate pyrophosphatase (202 aa).

The Proton acceptor role is filled by D79.

This sequence belongs to the Maf family. It depends on a divalent metal cation as a cofactor.

The protein resides in the cytoplasm. The enzyme catalyses a ribonucleoside 5'-triphosphate + H2O = a ribonucleoside 5'-phosphate + diphosphate + H(+). The catalysed reaction is a 2'-deoxyribonucleoside 5'-triphosphate + H2O = a 2'-deoxyribonucleoside 5'-phosphate + diphosphate + H(+). Its function is as follows. Nucleoside triphosphate pyrophosphatase. May have a dual role in cell division arrest and in preventing the incorporation of modified nucleotides into cellular nucleic acids. The sequence is that of Nucleoside triphosphate pyrophosphatase from Rhodopseudomonas palustris (strain BisB5).